A 394-amino-acid chain; its full sequence is Aromatic-amino-acid aminotransferase (394 aa).

Substrate contacts are provided by glycine 34, tyrosine 65, tryptophan 127, and asparagine 180. Lysine 243 carries the N6-(pyridoxal phosphate)lysine modification. Arginine 371 provides a ligand contact to substrate.

This sequence belongs to the class-I pyridoxal-phosphate-dependent aminotransferase family. In terms of assembly, homodimer. Pyridoxal 5'-phosphate is required as a cofactor.

It is found in the cytoplasm. The enzyme catalyses an aromatic L-alpha-amino acid + 2-oxoglutarate = an aromatic oxo-acid + L-glutamate. Functionally, shows activities toward both dicarboxylic and aromatic substrates. The sequence is that of Aromatic-amino-acid aminotransferase (tyrB) from Paracoccus denitrificans.